The sequence spans 374 residues: Flavonoid O-methyltransferase-like protein Os11g0303600 (374 aa).

S-adenosyl-L-homocysteine-binding residues include aspartate 242, aspartate 262, methionine 263, and lysine 276. Histidine 280 (proton acceptor) is an active-site residue.

It belongs to the class I-like SAM-binding methyltransferase superfamily. Cation-independent O-methyltransferase family. COMT subfamily.

In Oryza sativa subsp. japonica (Rice), this protein is Flavonoid O-methyltransferase-like protein Os11g0303600.